A 387-amino-acid chain; its full sequence is Succinate--CoA ligase [ADP-forming] subunit beta (387 aa).

ATP contacts are provided by residues K46, 53 to 55, E99, A102, and E107; that span reads GRG. Mg(2+)-binding residues include N199 and D213. Residues N264 and 321 to 323 contribute to the substrate site; that span reads GIV.

The protein belongs to the succinate/malate CoA ligase beta subunit family. In terms of assembly, heterotetramer of two alpha and two beta subunits. The cofactor is Mg(2+).

It carries out the reaction succinate + ATP + CoA = succinyl-CoA + ADP + phosphate. The enzyme catalyses GTP + succinate + CoA = succinyl-CoA + GDP + phosphate. It functions in the pathway carbohydrate metabolism; tricarboxylic acid cycle; succinate from succinyl-CoA (ligase route): step 1/1. Its function is as follows. Succinyl-CoA synthetase functions in the citric acid cycle (TCA), coupling the hydrolysis of succinyl-CoA to the synthesis of either ATP or GTP and thus represents the only step of substrate-level phosphorylation in the TCA. The beta subunit provides nucleotide specificity of the enzyme and binds the substrate succinate, while the binding sites for coenzyme A and phosphate are found in the alpha subunit. This Campylobacter jejuni subsp. jejuni serotype O:23/36 (strain 81-176) protein is Succinate--CoA ligase [ADP-forming] subunit beta.